We begin with the raw amino-acid sequence, 445 residues long: C4-dicarboxylate transport protein (445 aa).

Transmembrane regions (helical) follow at residues Val-24–Pro-44, Leu-62–Ile-82, Phe-105–Ala-125, Gly-163–Gly-183, Phe-201–Phe-221, Leu-237–Ala-257, Ile-322–Thr-342, and Ala-370–Ile-390.

Belongs to the dicarboxylate/amino acid:cation symporter (DAACS) (TC 2.A.23) family.

The protein resides in the cell inner membrane. Its function is as follows. Responsible for the transport of dicarboxylates such as succinate, fumarate, and malate from the periplasm across the membrane. The protein is C4-dicarboxylate transport protein of Rhodopseudomonas palustris (strain BisB5).